Here is a 513-residue protein sequence, read N- to C-terminus: MAEPSVESSSPGGSATSDDHEFDPSADMLVHDFDDERTLEEEEMMEGERNFNSEIEDLNRESDMPIQELLSLYGYDGTIPLQEDDDDEDEEEEEEEGEDDDDVDNDDNSGCSGENKEETIKDSSGQEDDTQSSNDDPAPSVASQDPQELIRPRRCKYFDTNSEIEEESEEDEDYIPSEDWKKEIMVGSMFQAEIPAGICRYKENEKVYENDDQLLWNPDVLPEDKVIEFLNEASRRTGDEKGLDAIPEGSHIKDNEQALYELVKCNFDTEESLRRLRFNVKAAREELSVWTEEECRNFEQGLKVYGKDFHVIQANKVRTRSVGECVAFYYMWKKSERYDFFAQQTRFGKKKYNLHPGVTDYMDRLLDESESAASSRAPSPPPTASNSSTSQSEREDSTTSSSNQNGLSANGPGDIPSKDEAKPEGLHINGPTGGKKTPHTDLDTNGYETESLSLDPKVAHSTSRSENDFEEKNERPLKRRRINSNGKESPGSSEFFQEANSHGKLEELETLDD.

Over residues 1–16 (MAEPSVESSSPGGSAT) the composition is skewed to low complexity. Residues 1 to 174 (MAEPSVESSS…EEESEEDEDY (174 aa)) are disordered. 2 stretches are compositionally biased toward basic and acidic residues: residues 17–36 (SDDH…FDDE) and 46–63 (EGER…RESD). Over residues 82–107 (QEDDDDEDEEEEEEEGEDDDDVDNDD) the composition is skewed to acidic residues. Positions 131–146 (QSSNDDPAPSVASQDP) are enriched in polar residues. The tract at residues 157–261 (YFDTNSEIEE…IKDNEQALYE (105 aa)) is interaction with HDAC1. Over residues 162–174 (SEIEEESEEDEDY) the composition is skewed to acidic residues. One can recognise an ELM2 domain in the interval 182-280 (KEIMVGSMFQ…ESLRRLRFNV (99 aa)). Residues 285–337 (EELSVWTEEECRNFEQGLKVYGKDFHVIQANKVRTRSVGECVAFYYMWKKSER) form the SANT domain. Positions 368–513 (ESESAASSRA…KLEELETLDD (146 aa)) are disordered. Composition is skewed to basic and acidic residues over residues 416–425 (PSKDEAKPEG) and 463–476 (SRSE…NERP). A compositionally biased stretch (polar residues) spans 483–500 (NSNGKESPGSSEFFQEAN).

It localises to the nucleus. Functionally, transcriptional repressor regulating the expression of a number of genes. Probably functions through recruitment of histone deacetylases involved in chromatin silencing. This Gallus gallus (Chicken) protein is Mesoderm induction early response protein 1 (MIER1).